Here is a 324-residue protein sequence, read N- to C-terminus: NAD(P)H-dependent D-xylose reductase XYR1 (324 aa).

Tyr50 acts as the Proton donor in catalysis. Substrate is bound at residue His112. Residues 168 to 169, 217 to 226, and 273 to 283 each bind NAD(+); these read SN, SSFGPASFKE, and KSSREKTMKSN.

It belongs to the aldo/keto reductase family.

The enzyme catalyses xylitol + NAD(+) = D-xylose + NADH + H(+). It carries out the reaction xylitol + NADP(+) = D-xylose + NADPH + H(+). It participates in carbohydrate metabolism; D-xylose degradation. Functionally, catalyzes the initial reaction in the xylose utilization pathway by reducing D-xylose into xylitol. Xylose is a major component of hemicelluloses such as xylan. Most fungi utilize D-xylose via three enzymatic reactions, xylose reductase (XR), xylitol dehydrogenase (XDH), and xylulokinase, to form xylulose 5-phosphate, which enters pentose phosphate pathway. This Pyricularia oryzae (strain 70-15 / ATCC MYA-4617 / FGSC 8958) (Rice blast fungus) protein is NAD(P)H-dependent D-xylose reductase XYR1 (XYR1).